Consider the following 101-residue polypeptide: uncharacterized protein (101 aa).

A run of 2 helical transmembrane segments spans residues 3–23 and 68–88; these read IIGS…AIIF and VIVL…IIVI.

The protein resides in the cell membrane. This is an uncharacterized protein from Ureaplasma parvum serovar 3 (strain ATCC 700970).